Reading from the N-terminus, the 236-residue chain is Phosphoribosylaminoimidazole-succinocarboxamide synthase (236 aa).

It belongs to the SAICAR synthetase family.

It carries out the reaction 5-amino-1-(5-phospho-D-ribosyl)imidazole-4-carboxylate + L-aspartate + ATP = (2S)-2-[5-amino-1-(5-phospho-beta-D-ribosyl)imidazole-4-carboxamido]succinate + ADP + phosphate + 2 H(+). The protein operates within purine metabolism; IMP biosynthesis via de novo pathway; 5-amino-1-(5-phospho-D-ribosyl)imidazole-4-carboxamide from 5-amino-1-(5-phospho-D-ribosyl)imidazole-4-carboxylate: step 1/2. In Chlorobium phaeobacteroides (strain BS1), this protein is Phosphoribosylaminoimidazole-succinocarboxamide synthase.